The chain runs to 609 residues: MQINLLNDFIKAYENTYSVSFDDSFKGRIQELCKELNEPFMHASYALENELKELVFSLDKNVNIAIIGQFSSGKSSLLNLILGRDCLPTGVVPVTFKPTFLRYAKEYFLRVEFEDGSDIITNIEKLAFYTDQRNEVKQAKSLHIFAPIPLLEKITLVDTPGLNANENDTLTTLDELKNIHGAIWLSLIDNAGKKSEEDAIKANLELLGENSICVLNQKDKLSAEELDNVLNYAKSVFLKYFNELIAISCKEAKDEQSYEKSNFQSLLDFLTQLDTTVLKEKFVKRKILNLCEILEDENQLFVGIFDRLLNQFQSYEKHLLLAYENFLKEIEILNHQILEQLKSISERISSEIFASVKEKDAYFYKESKGFLKKDLYTRYDYKAPYISSDDAFLAMFYNSDVMSKEFKKIKNELYKSFEEIKMKLKDFINILEREILLFKAEFSNIQKDHIFQSDKNFSELRAFCNASDEYFLKDFKELLFKSILELDLFFEKLNLKAFTNYENATKLSLAFFSRKINESRVLYELDSSEFVLFYPKKSEIYERVLNELNVYEFETLLINKPILTKIAKNFLEQSQNLIQEKNKFLDLKKAELQKRRAQILNVRESIKED.

An inserts into assembly domain of DLP1, required for tetramerization region spans residues 1 to 16 (MQINLLNDFIKAYENT). The tract at residues 17 to 25 (YSVSFDDSF) is linker. A Dynamin-type G domain is found at 63-310 (NIAIIGQFSS…FVGIFDRLLN (248 aa)). Residues 68 to 75 (GQFSSGKS) form a G1 motif region. Residue 72-76 (SGKSS) coordinates GDP. Residues 93-95 (PVT) are G2 motif. The G3 motif stretch occupies residues 158–161 (DTPG). A G4 motif region spans residues 216–219 (NQKD).

This sequence belongs to the TRAFAC class dynamin-like GTPase superfamily. Dynamin/Fzo/YdjA family. Forms a 2:2 heterotetramer with DLP1. DLP2 forms a central back-to-back dimer flanked on each side by a DLP1 subunit. In the crystal structures the 2 DLP1 subunits are in very different conformations.

The protein localises to the cytoplasm. Its subcellular location is the cytosol. It carries out the reaction GTP + H2O = GDP + phosphate + H(+). In terms of biological role, the heterotetrameric DLP1(2)-DLP2(2) complex tethers liposomes and may mediate their fusion. Initial binding is probably mediated by DLP1, while DLP2 couples DLP1 subunits and increases the effective reach of the complex up to 45 nm. The role of the nucleotide is unknown. This subunit alone very weakly binds to liposomes; GTP, GDP, GMPPCP and GMPPNP do not change heterotetramer binding. Tetramerization is required for GTPase activity, suggesting the GTPase domains (dynamin-type G) from DLP1 and DLP2 must dimerize to reconstitute the GTPase active site. The polypeptide is Dynamin-like protein 2 (Campylobacter jejuni subsp. jejuni serotype O:23/36 (strain 81-176)).